A 442-amino-acid chain; its full sequence is Putative amino acid transporter YuiF (442 aa).

11 consecutive transmembrane segments (helical) span residues 21–41 (IVIALIIGALAGGLTGGLGLG), 51–71 (LGGNATVAVSYAMLGAFAAAL), 103–123 (LIVLIILIVSCFSQNVVPVHI), 146–166 (LIACVITFGLTAPYILLPVGF), 190–210 (IPYALIIPVAGMVVGLILSVI), 236–256 (IGIAVLAIVVSLGVQLYLSQT), 259–279 (VEGMIMGALAGLIVLFVSGVM), 292–312 (MVLMAFIGFVMLVAAGFSNVL), 335–355 (LGALLMLIVGLLITMGIGSSF), 364–384 (IFVPLCMQLGFSPMATIAIIG), and 421–441 (VPTFIFYNIPLVIFGWIAALV).

Its subcellular location is the cell membrane. This chain is Putative amino acid transporter YuiF (yuiF), found in Bacillus subtilis (strain 168).